A 285-amino-acid polypeptide reads, in one-letter code: Ribosomal RNA small subunit methyltransferase A (285 aa).

S-adenosyl-L-methionine-binding residues include asparagine 21, leucine 23, glycine 48, glutamate 69, aspartate 94, and asparagine 127.

The protein belongs to the class I-like SAM-binding methyltransferase superfamily. rRNA adenine N(6)-methyltransferase family. RsmA subfamily.

Its subcellular location is the cytoplasm. The catalysed reaction is adenosine(1518)/adenosine(1519) in 16S rRNA + 4 S-adenosyl-L-methionine = N(6)-dimethyladenosine(1518)/N(6)-dimethyladenosine(1519) in 16S rRNA + 4 S-adenosyl-L-homocysteine + 4 H(+). In terms of biological role, specifically dimethylates two adjacent adenosines (A1518 and A1519) in the loop of a conserved hairpin near the 3'-end of 16S rRNA in the 30S particle. May play a critical role in biogenesis of 30S subunits. This chain is Ribosomal RNA small subunit methyltransferase A, found in Koribacter versatilis (strain Ellin345).